A 596-amino-acid chain; its full sequence is DNA mismatch repair protein MutL (596 aa).

The protein belongs to the DNA mismatch repair MutL/HexB family.

In terms of biological role, this protein is involved in the repair of mismatches in DNA. It is required for dam-dependent methyl-directed DNA mismatch repair. May act as a 'molecular matchmaker', a protein that promotes the formation of a stable complex between two or more DNA-binding proteins in an ATP-dependent manner without itself being part of a final effector complex. The chain is DNA mismatch repair protein MutL from Leptospira borgpetersenii serovar Hardjo-bovis (strain L550).